The chain runs to 242 residues: MKVSLFITCLSDVFFPQVGRSVVEIMNQCGVELDFPEGQTCCGQPAYNSGYQEDAKLAAKQMIKAFEHSEYIVTPSGSCASMVHHYYKEMFKGDSEWYEKAVHLADRTYELTDFLVNVLGKNDWKSKLVEKAVFHQSCHMSRALGIKEEPLKLLSQVEGLDIKELPYCQDCCGFGGTFAVKMSSISETMVDEKIKHIEATEANLLIGADMGCLMNIGGRLRRKNKNIQVLHVAEVLAKGLNK.

This sequence belongs to the LutA/YkgE family.

Functionally, is involved in L-lactate degradation and allows cells to grow with lactate as the sole carbon source. This Bacillus cereus (strain ZK / E33L) protein is Lactate utilization protein A 2.